Reading from the N-terminus, the 896-residue chain is MYERAMLSKNFDHAANEQRIYAGWEHGGAFAANPASSATPFTIMIPPPNVTGSLHMGHALTFTLQDSLVRWRRMQGRDVLWQPGTDHAGIATQMVVERLLASEGSPGRREIGRDAFLDRVWRWKAESGGNITHQLRRLGASLDWGRERFTMDEGLSAAVRDVFVTLYRQGLIYRDRRLVNWDPQLQTAISDLEVESREVRGNLWHIRYPLEDGEGSIIVATTRPETMLGDSAVAVHPEDERYTALIGKCVILPLTGRRIPIVADTYSDPEKGTGAVKITPAHDFNDFAVGRRHDLPMPSIMDREGRITLAEITCTEATDIADPAFVTGLEGQERFAARKAIVARLEEMGFLETIETHTHHVPHGDRSGVPIEPLLTTQWFCNAAELAKPAVAAVESGDTRFVPKQWENTFFAWLRDIQPWCISRQLWWGHRIPAWYAPDGSVYVAATAEEAQAAYGGSETLTQDEDVLDTWFSSALWPFSTLGWPEDDSILSRYYPTDVLITGFDIIFFWVARMMMMGLHIQKQVPFRDVYIHGLVRDERGQKMSKSKGNVIDPLALIEAHGADPMRFAICLLAGPGRDIKLGPKRVEDASRFVTKLWNASVFCERNGVKPEPGFDPATVTLPLSRWILASADDAIRAATQALEAYRFDDYAATCYRFVWNTFCDWFVELAKPILLATDTPEAAEIKAVAAHVLGVVLRLLHPAMPYVTETLWDHFGYGPEFSLIRAPWPEVGVSDPAREAARQEIDWLVRLIGEVRTVRNEMNVPPSTLTPILLKDAVAETVARAERWRDQIARLARASSVTSLEGALPKGSAQAVLDEAILVIPLEGVIDLDAERTRLTRERDKARDEAAKVVRKLENADFVARAKPEVVEENRDRLAALEADIARLGAALERL.

Residues 48–58 (PNVTGSLHMGH) carry the 'HIGH' region motif. Residues 543–547 (KMSKS) carry the 'KMSKS' region motif. Position 546 (K546) interacts with ATP. Positions 830–896 (VIDLDAERTR…ARLGAALERL (67 aa)) form a coiled coil.

Belongs to the class-I aminoacyl-tRNA synthetase family. ValS type 1 subfamily. Monomer.

It is found in the cytoplasm. It carries out the reaction tRNA(Val) + L-valine + ATP = L-valyl-tRNA(Val) + AMP + diphosphate. In terms of biological role, catalyzes the attachment of valine to tRNA(Val). As ValRS can inadvertently accommodate and process structurally similar amino acids such as threonine, to avoid such errors, it has a 'posttransfer' editing activity that hydrolyzes mischarged Thr-tRNA(Val) in a tRNA-dependent manner. The sequence is that of Valine--tRNA ligase from Granulibacter bethesdensis (strain ATCC BAA-1260 / CGDNIH1).